The sequence spans 183 residues: MIIKREMRQDKRAAPKAPINENISAREVRLIGADGEQIGIVSIDEALRIAEESKLDLVEISADAIPPVCRVMDYGKSIFEKKKQVAAAKKNQKQIQVKEIKFRPGTEEGDYQVKLRNLVRFLSDGDRAKVSLRFRGREMAHQELGMELLKRVEADLLEYGSVEQHPKMEGRQLIMVIAPKKKK.

The protein belongs to the IF-3 family. Monomer.

The protein resides in the cytoplasm. IF-3 binds to the 30S ribosomal subunit and shifts the equilibrium between 70S ribosomes and their 50S and 30S subunits in favor of the free subunits, thus enhancing the availability of 30S subunits on which protein synthesis initiation begins. This is Translation initiation factor IF-3 from Pseudomonas fluorescens (strain SBW25).